Here is a 750-residue protein sequence, read N- to C-terminus: Olfactomedin-like protein 2B (750 aa).

The N-terminal stretch at 1–22 (MAKPRLLVLYFALIVVPAWVSS) is a signal peptide. Coiled coils occupy residues 40-68 (AEDE…KVKA) and 179-213 (KLEE…GKEN). Asn-187 and Asn-213 each carry an N-linked (GlcNAc...) asparagine glycan. Disordered stretches follow at residues 346 to 437 (TRRP…PPAV) and 452 to 484 (VPPT…PEEE). Composition is skewed to polar residues over residues 354–384 (QGHS…SDPS) and 393–413 (PTLQ…LQPS). The span at 416–430 (VPATTVAHTATQQPA) shows a compositional bias: low complexity. One can recognise an Olfactomedin-like domain in the interval 493–750 (RCKDTLSTIT…QVTYHVIFAY (258 aa)). Cys-494 and Cys-680 form a disulfide bridge. A glycan (N-linked (GlcNAc...) asparagine) is linked at Asn-695.

Homodimer. Binds to heparin and chondroitin sulfate E. O-glycosylated and N-glycosylated.

The protein resides in the secreted. The protein is Olfactomedin-like protein 2B (OLFML2B) of Homo sapiens (Human).